We begin with the raw amino-acid sequence, 126 residues long: Aspartate 1-decarboxylase (126 aa).

The Schiff-base intermediate with substrate; via pyruvic acid role is filled by S25. S25 carries the pyruvic acid (Ser) modification. T57 lines the substrate pocket. Y58 (proton donor) is an active-site residue. 73–75 (GGA) is a substrate binding site.

This sequence belongs to the PanD family. Heterooctamer of four alpha and four beta subunits. Pyruvate is required as a cofactor. Is synthesized initially as an inactive proenzyme, which is activated by self-cleavage at a specific serine bond to produce a beta-subunit with a hydroxyl group at its C-terminus and an alpha-subunit with a pyruvoyl group at its N-terminus.

The protein resides in the cytoplasm. It catalyses the reaction L-aspartate + H(+) = beta-alanine + CO2. It functions in the pathway cofactor biosynthesis; (R)-pantothenate biosynthesis; beta-alanine from L-aspartate: step 1/1. Catalyzes the pyruvoyl-dependent decarboxylation of aspartate to produce beta-alanine. The protein is Aspartate 1-decarboxylase of Xanthomonas axonopodis pv. citri (strain 306).